Here is a 167-residue protein sequence, read N- to C-terminus: Ribosome maturation factor RimM (167 aa).

The 74-residue stretch at 92-165 (EDTYYIADII…RITIDPIEGM (74 aa)) folds into the PRC barrel domain.

This sequence belongs to the RimM family. In terms of assembly, binds ribosomal protein uS19.

The protein localises to the cytoplasm. Its function is as follows. An accessory protein needed during the final step in the assembly of 30S ribosomal subunit, possibly for assembly of the head region. Essential for efficient processing of 16S rRNA. May be needed both before and after RbfA during the maturation of 16S rRNA. It has affinity for free ribosomal 30S subunits but not for 70S ribosomes. The sequence is that of Ribosome maturation factor RimM from Alkaliphilus oremlandii (strain OhILAs) (Clostridium oremlandii (strain OhILAs)).